Here is a 182-residue protein sequence, read N- to C-terminus: Crossover junction endodeoxyribonuclease RuvC (182 aa).

Catalysis depends on residues Asp7, Glu67, and Asp139. Asp7, Glu67, and Asp139 together coordinate Mg(2+).

It belongs to the RuvC family. Homodimer which binds Holliday junction (HJ) DNA. The HJ becomes 2-fold symmetrical on binding to RuvC with unstacked arms; it has a different conformation from HJ DNA in complex with RuvA. In the full resolvosome a probable DNA-RuvA(4)-RuvB(12)-RuvC(2) complex forms which resolves the HJ. Requires Mg(2+) as cofactor.

It is found in the cytoplasm. It catalyses the reaction Endonucleolytic cleavage at a junction such as a reciprocal single-stranded crossover between two homologous DNA duplexes (Holliday junction).. Functionally, the RuvA-RuvB-RuvC complex processes Holliday junction (HJ) DNA during genetic recombination and DNA repair. Endonuclease that resolves HJ intermediates. Cleaves cruciform DNA by making single-stranded nicks across the HJ at symmetrical positions within the homologous arms, yielding a 5'-phosphate and a 3'-hydroxyl group; requires a central core of homology in the junction. The consensus cleavage sequence is 5'-(A/T)TT(C/G)-3'. Cleavage occurs on the 3'-side of the TT dinucleotide at the point of strand exchange. HJ branch migration catalyzed by RuvA-RuvB allows RuvC to scan DNA until it finds its consensus sequence, where it cleaves and resolves the cruciform DNA. The sequence is that of Crossover junction endodeoxyribonuclease RuvC from Bordetella pertussis (strain Tohama I / ATCC BAA-589 / NCTC 13251).